Here is a 332-residue protein sequence, read N- to C-terminus: MSVELRVGNRFRIGQKIGSGSFGEIFRGTNIQTGDPVAIKLEQVKTRHPQLAFEARFYRVLNAGGGVVGIPNVLYHGVEGEFNVMVIDLLGPSLEDLFSFCGRRLSLKTTLMLAEQMIARIEFVHSKSIIHRDIKPDNFLMGTGKKGHHVYIIDFGLAKKYRDARTHQHIPYKEGKSLTGTARYCSINTHIGIEQSRRDDLEGIGYILMYFLRGSLPWQGLKAHTKQEKYARISDRKQTTSVETLCRSFPAEFAAYLNYTRSLHFEDKPDYSYLKRLFRELFVREGYHVDYVFDWTLKRIHDTLQEGRADQQQQQQQQQQRRGSEKEDEHPV.

A Protein kinase domain is found at 11-282; that stretch reads FRIGQKIGSG…YLKRLFRELF (272 aa). ATP contacts are provided by residues 17 to 25 and K40; that span reads IGSGSFGEI. Catalysis depends on D133, which acts as the Proton acceptor. The segment at 306 to 332 is disordered; it reads EGRADQQQQQQQQQQRRGSEKEDEHPV. The segment covering 311 to 320 has biased composition (low complexity); it reads QQQQQQQQQQ. Basic and acidic residues predominate over residues 322–332; sequence RGSEKEDEHPV.

Belongs to the protein kinase superfamily. Ser/Thr protein kinase family. Mg(2+) is required as a cofactor.

It carries out the reaction L-seryl-[protein] + ATP = O-phospho-L-seryl-[protein] + ADP + H(+). It catalyses the reaction L-threonyl-[protein] + ATP = O-phospho-L-threonyl-[protein] + ADP + H(+). Its function is as follows. Serine/threonine protein kinase. May phosphorylate ZC3H11 during unstressed conditions, leading to proteasome-dependent degradation of ZC3H11. The chain is Casein kinase I isoform 2 from Trypanosoma brucei brucei.